A 249-amino-acid chain; its full sequence is LexA repressor (249 aa).

The segment at 1–25 (MAAAATGGRATSQPKKTTKGLTPRQ) is disordered. The H-T-H motif DNA-binding region spans 45 to 65 (MREIGDTVGLASLSSVTHQLS). Catalysis depends on for autocatalytic cleavage activity residues Ser173 and Lys210.

It belongs to the peptidase S24 family. As to quaternary structure, homodimer.

The catalysed reaction is Hydrolysis of Ala-|-Gly bond in repressor LexA.. Its function is as follows. Represses a number of genes involved in the response to DNA damage (SOS response), including recA and lexA. In the presence of single-stranded DNA, RecA interacts with LexA causing an autocatalytic cleavage which disrupts the DNA-binding part of LexA, leading to derepression of the SOS regulon and eventually DNA repair. This Pseudarthrobacter chlorophenolicus (strain ATCC 700700 / DSM 12829 / CIP 107037 / JCM 12360 / KCTC 9906 / NCIMB 13794 / A6) (Arthrobacter chlorophenolicus) protein is LexA repressor.